The sequence spans 324 residues: tRNA pseudouridine synthase B (324 aa).

Asp49 (nucleophile) is an active-site residue. The tract at residues 87 to 107 (RSTDDLEGQPTKTSDKRPSRE) is disordered.

The protein belongs to the pseudouridine synthase TruB family. Type 1 subfamily.

The enzyme catalyses uridine(55) in tRNA = pseudouridine(55) in tRNA. Functionally, responsible for synthesis of pseudouridine from uracil-55 in the psi GC loop of transfer RNAs. This is tRNA pseudouridine synthase B from Brucella abortus (strain 2308).